Reading from the N-terminus, the 105-residue chain is uncharacterized protein (105 aa).

Positions 22-105 (GSAGHGATEA…KKRIIKGKVM (84 aa)) are disordered. Positions 61–83 (HDSRPARGDARKRHCQENNKTDR) are enriched in basic and acidic residues. Residues 93-105 (NRRKKRIIKGKVM) show a composition bias toward basic residues.

This is an uncharacterized protein from Escherichia coli (strain K12).